Reading from the N-terminus, the 93-residue chain is Stromal cell-derived factor 1 (93 aa).

The N-terminal stretch at 1–21 is a signal peptide; the sequence is MNAKVVVVLVLVLTALCLSDG. Residues 22–23 carry the Receptor activation motif motif; it reads KP. A receptor and heparin binding region spans residues 29-33; sequence RCPCR. Intrachain disulfides connect Cys-30–Cys-55 and Cys-32–Cys-71. Receptor binding regions lie at residues 39 to 41, 48 to 50, and 60 to 70; these read VAR, KIL, and VARLKNNNRQV. Heparin-binding positions include 41–51, Arg-62, Gln-69, and Lys-85; that span reads RANVKHLKILN.

The protein belongs to the intercrine alpha (chemokine CxC) family. As to quaternary structure, monomer or homodimer; in equilibrium. Dimer formation is induced by non acidic pH and the presence of multivalent anions, and by binding to CXCR4 or heparin. Monomeric form is required for full chemotactic activity and resistance to ischemia/reperfusion injury, whereas the dimeric form acts as a partial agonist of CXCR4, stimulating Ca2+ mobilization but with no chemotactic activity and instead acts as a selective antagonist that blocks chemotaxis induced by the monomeric form. Interacts with the N-terminus of ACKR3. Interacts with integrin subunit ITGB3 (via the allosteric site (site 2)). Interacts with TNFAIP6 (via Link domain). (Microbial infection) Interacts with molluscum contagiosum virus protein MC148. Processed forms SDF-1-beta(3-72) and SDF-1-alpha(3-67) are produced after secretion by proteolytic cleavage of isoforms Beta and Alpha, respectively. The N-terminal processing is probably achieved by DPP4. Isoform Alpha is first cleaved at the C-terminus to yield a SDF-1-alpha(1-67) intermediate before being processed at the N-terminus. The C-terminal processing of isoform Alpha is reduced by binding to heparin and, probably, cell surface proteoglycans. Isoform Alpha and isoform Beta are ubiquitously expressed, with highest levels detected in liver, pancreas and spleen. Isoform Gamma is mainly expressed in heart, with weak expression detected in several other tissues. Isoform Delta, isoform Epsilon and isoform Theta have highest expression levels in pancreas, with lower levels detected in heart, kidney, liver and spleen.

It is found in the secreted. In terms of biological role, chemoattractant active on T-lymphocytes and monocytes but not neutrophils. Activates the C-X-C chemokine receptor CXCR4 to induce a rapid and transient rise in the level of intracellular calcium ions and chemotaxis. SDF-1-beta(3-72) and SDF-1-alpha(3-67) show a reduced chemotactic activity. Binding to cell surface proteoglycans seems to inhibit formation of SDF-1-alpha(3-67) and thus to preserve activity on local sites. Also binds to atypical chemokine receptor ACKR3, which activates the beta-arrestin pathway and acts as a scavenger receptor for SDF-1. Binds to the allosteric site (site 2) of integrins and activates integrins ITGAV:ITGB3, ITGA4:ITGB1 and ITGA5:ITGB1 in a CXCR4-independent manner. Acts as a positive regulator of monocyte migration and a negative regulator of monocyte adhesion via the LYN kinase. Stimulates migration of monocytes and T-lymphocytes through its receptors, CXCR4 and ACKR3, and decreases monocyte adherence to surfaces coated with ICAM-1, a ligand for beta-2 integrins. SDF1A/CXCR4 signaling axis inhibits beta-2 integrin LFA-1 mediated adhesion of monocytes to ICAM-1 through LYN kinase. Inhibits CXCR4-mediated infection by T-cell line-adapted HIV-1. Plays a protective role after myocardial infarction. Induces down-regulation and internalization of ACKR3 expressed in various cells. Has several critical functions during embryonic development; required for B-cell lymphopoiesis, myelopoiesis in bone marrow and heart ventricular septum formation. Stimulates the proliferation of bone marrow-derived B-cell progenitors in the presence of IL7 as well as growth of stromal cell-dependent pre-B-cells. The protein is Stromal cell-derived factor 1 (CXCL12) of Homo sapiens (Human).